The sequence spans 229 residues: Small ribosomal subunit protein uS2c (229 aa).

It belongs to the universal ribosomal protein uS2 family.

The protein resides in the plastid. The protein localises to the chloroplast. The protein is Small ribosomal subunit protein uS2c (rps2) of Emiliania huxleyi (Coccolithophore).